A 267-amino-acid polypeptide reads, in one-letter code: MNRAKTILDIQKMKATGEKITVLTSYDYPFTRIMDECGIDMILVGDSVGVVFAGHDNTLPVTVDDMLYHTRAVTRARPKALVVTDMPFLSYQTDLRDARINAGRLVKEGGAEAVKLEGGAHVTDTIRAIVDMDIPVMAHIGLTPQSIHRMGGYKVQGKKDEQAQRLLEDALAVQEAGAFAVVLEGIPLKLAGRITAELSIPTIGIGAGPHCDGQVLVIHDILGLCEKYSPKFVKRYGDARTLISDAVASYISEVKKGEFPTEGHSFS.

Mg(2+) contacts are provided by Asp46 and Asp85. 3-methyl-2-oxobutanoate-binding positions include 46–47 (DS), Asp85, and Lys115. Glu117 is a binding site for Mg(2+). Residue Glu184 is the Proton acceptor of the active site.

This sequence belongs to the PanB family. Homodecamer; pentamer of dimers. The cofactor is Mg(2+).

Its subcellular location is the cytoplasm. The enzyme catalyses 3-methyl-2-oxobutanoate + (6R)-5,10-methylene-5,6,7,8-tetrahydrofolate + H2O = 2-dehydropantoate + (6S)-5,6,7,8-tetrahydrofolate. Its pathway is cofactor biosynthesis; (R)-pantothenate biosynthesis; (R)-pantoate from 3-methyl-2-oxobutanoate: step 1/2. Functionally, catalyzes the reversible reaction in which hydroxymethyl group from 5,10-methylenetetrahydrofolate is transferred onto alpha-ketoisovalerate to form ketopantoate. The sequence is that of 3-methyl-2-oxobutanoate hydroxymethyltransferase from Geobacter sulfurreducens (strain ATCC 51573 / DSM 12127 / PCA).